Reading from the N-terminus, the 571-residue chain is Proline--tRNA ligase (571 aa).

It belongs to the class-II aminoacyl-tRNA synthetase family. ProS type 1 subfamily. As to quaternary structure, homodimer.

The protein localises to the cytoplasm. The enzyme catalyses tRNA(Pro) + L-proline + ATP = L-prolyl-tRNA(Pro) + AMP + diphosphate. Functionally, catalyzes the attachment of proline to tRNA(Pro) in a two-step reaction: proline is first activated by ATP to form Pro-AMP and then transferred to the acceptor end of tRNA(Pro). As ProRS can inadvertently accommodate and process non-cognate amino acids such as alanine and cysteine, to avoid such errors it has two additional distinct editing activities against alanine. One activity is designated as 'pretransfer' editing and involves the tRNA(Pro)-independent hydrolysis of activated Ala-AMP. The other activity is designated 'posttransfer' editing and involves deacylation of mischarged Ala-tRNA(Pro). The misacylated Cys-tRNA(Pro) is not edited by ProRS. The chain is Proline--tRNA ligase from Ectopseudomonas mendocina (strain ymp) (Pseudomonas mendocina).